Reading from the N-terminus, the 721-residue chain is Exocyst complex component 3-like protein 4 (721 aa).

2 disordered regions span residues 1–52 (MPLP…SLGM) and 94–135 (GLTA…QAES). The segment covering 22–37 (SQTLPVTTWKSNSMKE) has biased composition (polar residues). Ser515 bears the Phosphoserine mark.

It belongs to the SEC6 family.

This is Exocyst complex component 3-like protein 4 (Exoc3l4) from Mus musculus (Mouse).